A 105-amino-acid polypeptide reads, in one-letter code: MTESEFLQLSDDIFDRIEQAIDEHGLDADTLRQGNVLEIEFDSGDKVIVNRHAVNQEMWIAAKSGGYHFSRRGEAWIASRDGAEFYATLAEAIRAGSGEAFDFAG.

The protein belongs to the frataxin family.

Involved in iron-sulfur (Fe-S) cluster assembly. May act as a regulator of Fe-S biogenesis. This Chromobacterium violaceum (strain ATCC 12472 / DSM 30191 / JCM 1249 / CCUG 213 / NBRC 12614 / NCIMB 9131 / NCTC 9757 / MK) protein is Iron-sulfur cluster assembly protein CyaY.